The primary structure comprises 157 residues: UPF0251 protein CLJ_B1488 (157 aa).

Belongs to the UPF0251 family.

This chain is UPF0251 protein CLJ_B1488, found in Clostridium botulinum (strain 657 / Type Ba4).